Here is a 357-residue protein sequence, read N- to C-terminus: RNA-binding protein 43 (357 aa).

Residues 15–104 enclose the RRM domain; the sequence is RTVVVAGLPV…VSLRVSHFGD (90 aa).

The chain is RNA-binding protein 43 (RBM43) from Homo sapiens (Human).